We begin with the raw amino-acid sequence, 344 residues long: GLIPR1-like protein 2 (344 aa).

An SCP domain is found at 58–192 (VNLHNELRGD…IHAAIFICNY (135 aa)). A helical membrane pass occupies residues 254-274 (TFILLLRILCFILCVITVLIV). 2 stretches are compositionally biased toward acidic residues: residues 292–304 (EESE…EEKE) and 312–334 (EMEM…EEET). A disordered region spans residues 292–344 (EESEAGNEEEEKEEEKKEKEEMEMEIMEMEEEKEEREEEEEETQKEKMEEEEK). Over residues 335-344 (QKEKMEEEEK) the composition is skewed to basic and acidic residues.

The protein belongs to the CRISP family. As to expression, highly expressed in testis. Detected in prostate, kidney, bladder, lung and bone marrow.

Its subcellular location is the membrane. This is GLIPR1-like protein 2 (GLIPR1L2) from Homo sapiens (Human).